The following is a 68-amino-acid chain: Large ribosomal subunit protein uL29 (68 aa).

It belongs to the universal ribosomal protein uL29 family.

This chain is Large ribosomal subunit protein uL29, found in Bradyrhizobium sp. (strain BTAi1 / ATCC BAA-1182).